The primary structure comprises 205 residues: Large ribosomal subunit protein bL25 (205 aa).

Residues 185–205 form a disordered region; the sequence is PAGAVSEAAEGGEAAGETPAA. Positions 186–205 are enriched in low complexity; it reads AGAVSEAAEGGEAAGETPAA.

The protein belongs to the bacterial ribosomal protein bL25 family. CTC subfamily. In terms of assembly, part of the 50S ribosomal subunit; part of the 5S rRNA/L5/L18/L25 subcomplex. Contacts the 5S rRNA. Binds to the 5S rRNA independently of L5 and L18.

This is one of the proteins that binds to the 5S RNA in the ribosome where it forms part of the central protuberance. The sequence is that of Large ribosomal subunit protein bL25 from Cupriavidus taiwanensis (strain DSM 17343 / BCRC 17206 / CCUG 44338 / CIP 107171 / LMG 19424 / R1) (Ralstonia taiwanensis (strain LMG 19424)).